The sequence spans 412 residues: Eukaryotic initiation factor 4A-2 (412 aa).

Ala-2 is subject to N-acetylalanine. The short motif at 39-67 is the Q motif element; it reads ESFDAMGLQENLLRGIYAYGFEKPSAIQQ. The 171-residue stretch at 70–240 folds into the Helicase ATP-binding domain; it reads IVPFCKGLDV…RKFMSKPVRI (171 aa). 83–90 serves as a coordination point for ATP; sequence AQSGTGKT. Thr-145 is modified (phosphothreonine). Residues 188 to 191 carry the DEAD box motif; sequence DEAD. In terms of domain architecture, Helicase C-terminal spans 251 to 412; it reads GIKQFYVNVE…ELPSNVADLL (162 aa).

This sequence belongs to the DEAD box helicase family. eIF4A subfamily. As to quaternary structure, eIF4F is a multi-subunit complex, the composition of which varies with external and internal environmental conditions. It is composed of at least EIF4A, EIF4E and EIF4G. In terms of tissue distribution, ubiquitous. Preferentially expressed in flowers, young leaves and roots.

The protein resides in the cytoplasm. It carries out the reaction ATP + H2O = ADP + phosphate + H(+). Functionally, ATP-dependent RNA helicase which is a subunit of the eIF4F complex involved in cap recognition and is required for mRNA binding to ribosome. In the current model of translation initiation, eIF4A unwinds RNA secondary structures in the 5'-UTR of mRNAs which is necessary to allow efficient binding of the small ribosomal subunit, and subsequent scanning for the initiator codon. The polypeptide is Eukaryotic initiation factor 4A-2 (TIF4A-2) (Arabidopsis thaliana (Mouse-ear cress)).